We begin with the raw amino-acid sequence, 513 residues long: Light-independent protochlorophyllide reductase subunit B (513 aa).

Asp36 is a binding site for [4Fe-4S] cluster. Asp299 acts as the Proton donor in catalysis. 434–435 is a binding site for substrate; sequence GM.

The protein belongs to the ChlB/BchB/BchZ family. Protochlorophyllide reductase is composed of three subunits; ChlL, ChlN and ChlB. Forms a heterotetramer of two ChlB and two ChlN subunits. It depends on [4Fe-4S] cluster as a cofactor.

The protein resides in the plastid. It localises to the chloroplast. It carries out the reaction chlorophyllide a + oxidized 2[4Fe-4S]-[ferredoxin] + 2 ADP + 2 phosphate = protochlorophyllide a + reduced 2[4Fe-4S]-[ferredoxin] + 2 ATP + 2 H2O. The protein operates within porphyrin-containing compound metabolism; chlorophyll biosynthesis (light-independent). In terms of biological role, component of the dark-operative protochlorophyllide reductase (DPOR) that uses Mg-ATP and reduced ferredoxin to reduce ring D of protochlorophyllide (Pchlide) to form chlorophyllide a (Chlide). This reaction is light-independent. The NB-protein (ChlN-ChlB) is the catalytic component of the complex. This is Light-independent protochlorophyllide reductase subunit B from Marchantia polymorpha (Common liverwort).